A 525-amino-acid polypeptide reads, in one-letter code: G-protein regulator 2 (525 aa).

The 22-residue stretch at 424–445 (PVDMMDLIFSMSSRMDDQRTEL) folds into the GoLoco domain. Residues 489-525 (TMNRILKRSKKSKSSLDSTNSIQGDDTRSDDVTMTSK) are disordered.

Interacts with gpr-1; gpr-1 forms a complex with lin-5 and GDP-bound goa-1.

It is found in the cytoplasm. The protein resides in the cell cortex. The protein localises to the cytoskeleton. It localises to the spindle. Functionally, in the 1-cell embryo, probably together with gpr-1, controls nuclear rotation and spindle elongation during mitosis. Complex of gpr-1 and gpr-2, in association with lin-5, activates G-protein signaling to affect mitotic spindle force. Polarity determinants (par genes) may regulate lin-5/gpr-1/gpr-2/goa-1 locally to create the asymmetric forces that drive spindle movement. The chain is G-protein regulator 2 (gpr-2) from Caenorhabditis elegans.